The sequence spans 260 residues: UPF0758 protein Smed_1459 (260 aa).

The 123-residue stretch at valine 138–phenylalanine 260 folds into the MPN domain. Residues histidine 209, histidine 211, and aspartate 222 each coordinate Zn(2+). Positions histidine 209–aspartate 222 match the JAMM motif motif.

It belongs to the UPF0758 family.

This chain is UPF0758 protein Smed_1459, found in Sinorhizobium medicae (strain WSM419) (Ensifer medicae).